Reading from the N-terminus, the 769-residue chain is Calcium up-regulated protein F (769 aa).

Positions 1–21 are disordered; it reads MINIKDISKSSNQSEEKSLKG. Ricin B-type lectin domains lie at 25-145 and 116-249; these read KTKY…WTTF and QGNG…WGIN.

This sequence belongs to the cup family.

Its subcellular location is the cytoplasm. The protein localises to the membrane. Its function is as follows. May play an important role in stabilizing and/or regulating the cell membrane during Ca(2+) stress or certain stages of development. The chain is Calcium up-regulated protein F (cupF) from Dictyostelium discoideum (Social amoeba).